The sequence spans 78 residues: Beta-defensin 12 (78 aa).

The N-terminal stretch at 1–27 is a signal peptide; that stretch reads MALSRGTFYFGLALFFIVVELPSGSWA. Disulfide bonds link Cys-46-Cys-73, Cys-53-Cys-67, and Cys-57-Cys-74.

Belongs to the beta-defensin family.

The protein localises to the secreted. Functionally, has antibacterial activity. The protein is Beta-defensin 12 (Defb12) of Rattus norvegicus (Rat).